Consider the following 823-residue polypeptide: MEVPISGGGGGERFCHAAQVVGADGEMDGEAMARFAAGAGLLGRGLSYAVVSIVGPQGSGKSTLLNQLFGTSFTEMDALKGRSQTTKGIWIAKAVGIEPFTVVMDLEGTDGRERGEDDTAFEKQSALFALAVSDIVMINLWCHDIGREHAANRPLLKTIFEVLMRLFSPRKTTLLLVIRDKTKTPLEYLTQALKEDIQKIWNAVRKPEVYKEAALSEFFNVEVTALSSYEEKENLFKEQVGQLRQRFIHSIAPGGLAADRRGVIPASGFCLSALQIWKVIRENKDLNLPAHKIMVATVRCEEIADEKLRSFISDKGWLELETAANSGLVPGFGKKLNAILDFYLSEYDTEAMYFDEDVRTAKRQQLESEILKHTYDAFKKMLEHLHHVVLNKFKSDLEQSLRSGEGFAASARYCVQSSMAEFDAGLRDALVKHAEWDTTKVRSKLEQHIEAHATSVRGTKLAELKANYEKKLLDTLAGPVQSILETGEKDSWACIRRLYRHATESAILAFSASLSEFELDQTTIRKMVMELREHARSIVEEKAREEAGNVLMRMKERFSTVLSRDKDSMPRTWKGNEDIRAITREARLAALRLMSVMAAVRLDDKPDKIDRALTTALLDGGPLSQKRSIEFTSDPLASSTWEEVSEKNTLITPVQCKSIWRQFNAETEYAVAQAISMQEAHRRSNNWLPPAWTVLLLAILGYNEFIFLLRNPLYLLGLFVAFVVSYAAWLQYDITAYFRHGTLSGLLTITSGFLPTIMDIITAVINMSHNQKSSSHPPRHRPPLHPQSFRNQAQQQSQAQVQYQAPSSLSSSSSVGSNSDDES.

Residues 1–688 lie on the Cytoplasmic side of the membrane; that stretch reads MEVPISGGGG…EAHRRSNNWL (688 aa). The 216-residue stretch at 45-260 folds into the GB1/RHD3-type G domain; sequence GLSYAVVSIV…IAPGGLAADR (216 aa). 55-62 contributes to the GTP binding site; the sequence is GPQGSGKS. Residues 226–246 adopt a coiled-coil conformation; it reads LSSYEEKENLFKEQVGQLRQR. The chain crosses the membrane as a helical span at residues 689–709; sequence PPAWTVLLLAILGYNEFIFLL. The Lumenal portion of the chain corresponds to 710–712; sequence RNP. A helical transmembrane segment spans residues 713–733; it reads LYLLGLFVAFVVSYAAWLQYD. The Cytoplasmic portion of the chain corresponds to 734–823; sequence ITAYFRHGTL…SVGSNSDDES (90 aa). The disordered stretch occupies residues 770 to 823; the sequence is NQKSSSHPPRHRPPLHPQSFRNQAQQQSQAQVQYQAPSSLSSSSSVGSNSDDES. Over residues 786-823 the composition is skewed to low complexity; that stretch reads PQSFRNQAQQQSQAQVQYQAPSSLSSSSSVGSNSDDES.

The protein belongs to the TRAFAC class dynamin-like GTPase superfamily. GB1/RHD3 GTPase family. RHD3 subfamily.

The protein resides in the endoplasmic reticulum membrane. Its function is as follows. Probable GTP-binding protein that may be involved in cell development. In Oryza sativa subsp. japonica (Rice), this protein is Protein ROOT HAIR DEFECTIVE 3 homolog 2.